Consider the following 452-residue polypeptide: tRNA modification GTPase MnmE (452 aa).

Residues Arg21, Glu78, and Lys118 each coordinate (6S)-5-formyl-5,6,7,8-tetrahydrofolate. Residues Gly214 to Gly375 enclose the TrmE-type G domain. Asn224 is a K(+) binding site. Residues Asn224–Ser229, Thr243–Thr249, and Asp268–Gly271 contribute to the GTP site. Position 228 (Ser228) interacts with Mg(2+). Thr243, Ile245, and Thr248 together coordinate K(+). Thr249 contacts Mg(2+). Position 452 (Lys452) interacts with (6S)-5-formyl-5,6,7,8-tetrahydrofolate.

Belongs to the TRAFAC class TrmE-Era-EngA-EngB-Septin-like GTPase superfamily. TrmE GTPase family. As to quaternary structure, homodimer. Heterotetramer of two MnmE and two MnmG subunits. K(+) serves as cofactor.

The protein localises to the cytoplasm. Exhibits a very high intrinsic GTPase hydrolysis rate. Involved in the addition of a carboxymethylaminomethyl (cmnm) group at the wobble position (U34) of certain tRNAs, forming tRNA-cmnm(5)s(2)U34. In Haemophilus ducreyi (strain 35000HP / ATCC 700724), this protein is tRNA modification GTPase MnmE.